A 159-amino-acid chain; its full sequence is Anaerobic nitrite reductase HB2 (159 aa).

A Globin domain is found at 2-152; it reads GFTEKQEGLV…LAEAIKAEMK (151 aa). The Homodimerization signature appears at 35–39; it reads EIAPG. 4 residues coordinate heme b: S45, K59, H63, and H98. Positions 105–117 match the Homodimerization motif; the sequence is DPHFEVVKEALLR.

This sequence belongs to the plant globin family. Homodimer. It depends on heme b as a cofactor.

It localises to the cytoplasm. The protein localises to the nucleus. It carries out the reaction Fe(III)-heme b-[protein] + nitric oxide + H2O = Fe(II)-heme b-[protein] + nitrite + 2 H(+). Its function is as follows. Phytoglobin that reduces nitrite to nitric oxide (NO) under anoxic conditions (e.g. during flooding or in waterlogged soil). May not function as an oxygen storage or transport protein. Has an unusually high affinity for O(2) through an hexacoordinate heme iron because of a very low dissociation constant. This chain is Anaerobic nitrite reductase HB2, found in Gossypium hirsutum (Upland cotton).